The following is a 418-amino-acid chain: Cytochrome P450 monooxygenase ABA2 (418 aa).

Heme is bound at residue Cys355.

The protein belongs to the cytochrome P450 family. Heme is required as a cofactor.

The protein operates within hormone biosynthesis. Its function is as follows. Cytochrome P450 monooxygenase involved in the biosynthesis of abscisic acid (ABA), a phytohormone that acts antagonistically toward salicylic acid (SA), jasmonic acid (JA) and ethylene (ETH) signaling, to impede plant defense responses. During pathogen-host interaction, ABA plays a dual role in disease severity by increasing plant susceptibility and accelerating pathogenesis in the fungus itself. The first step of the pathway catalyzes the reaction from farnesyl diphosphate to alpha-ionylideneethane performed by the alpha-ionylideneethane synthase ABA3 via a three-step reaction mechanism involving 2 neutral intermediates, beta-farnesene and allofarnesene. The cytochrome P450 monooxygenase ABA1 might then be involved in the conversion of alpha-ionylideneethane to alpha-ionylideneacetic acid. Alpha-ionylideneacetic acid is further converted to abscisic acid in 2 steps involving the cytochrome P450 monooxygenase ABA2 and the short-chain dehydrogenase/reductase ABA4, via the intermediates 1'-deoxy-ABA or 1',4'-trans-diol-ABA, depending on the order of action of these 2 enzymes. ABA2 is responsible for the hydroxylation of carbon atom C-1' and ABA4 might be involved in the oxidation of the C-4' carbon atom. The chain is Cytochrome P450 monooxygenase ABA2 from Pyricularia oryzae (strain Y34) (Rice blast fungus).